A 533-amino-acid chain; its full sequence is UDP-glucuronosyltransferase 1-2 (533 aa).

A signal peptide spans 1-27 (MDTGLCAPLRGLSGLLLLLCALPWAEG). N133, N141, N295, and N433 each carry an N-linked (GlcNAc...) asparagine glycan. Residues 491 to 507 (VIGFLLAIVLTVVFIVY) traverse the membrane as a helical segment.

This sequence belongs to the UDP-glycosyltransferase family.

It is found in the microsome. The protein localises to the endoplasmic reticulum membrane. It carries out the reaction glucuronate acceptor + UDP-alpha-D-glucuronate = acceptor beta-D-glucuronoside + UDP + H(+). Functionally, UDPGT is of major importance in the conjugation and subsequent elimination of potentially toxic xenobiotics and endogenous compounds. In Rattus norvegicus (Rat), this protein is UDP-glucuronosyltransferase 1-2 (Ugt1a2).